A 386-amino-acid polypeptide reads, in one-letter code: Coproporphyrinogen-III oxidase 1, chloroplastic (386 aa).

The transit peptide at 1 to 48 directs the protein to the chloroplast; the sequence is MASHSSTLLSSPTFAPFSSHRLHYSPNPSTLRFSRPIRNKPNLALRCS. Residues 125-134 are important for dimerization; the sequence is VLQDGNVFEK. Ser-174 contributes to the substrate binding site. The active-site Proton donor is His-188. Substrate contacts are provided by residues 190-192 and 344-349; these read NYR and GGRIES. Residues 326–361 form an important for dimerization region; that stretch reads YVEFNLVYDRGTTFGLKTGGRIESILVSLPLSARWE.

The protein belongs to the aerobic coproporphyrinogen-III oxidase family. In terms of assembly, homodimer. Expressed in cotyledons, leaves and roots.

It localises to the plastid. Its subcellular location is the chloroplast. The enzyme catalyses coproporphyrinogen III + O2 + 2 H(+) = protoporphyrinogen IX + 2 CO2 + 2 H2O. Its pathway is porphyrin-containing compound metabolism; protoporphyrin-IX biosynthesis; protoporphyrinogen-IX from coproporphyrinogen-III (O2 route): step 1/1. The protein operates within porphyrin-containing compound metabolism; chlorophyll biosynthesis. In terms of biological role, key enzyme in heme biosynthesis. Catalyzes the oxidative decarboxylation of propionic acid side chains of rings A and B of coproporphyrinogen III. This is Coproporphyrinogen-III oxidase 1, chloroplastic (CPX1) from Arabidopsis thaliana (Mouse-ear cress).